The following is a 134-amino-acid chain: Arginine decarboxylase proenzyme (134 aa).

The active-site Schiff-base intermediate with substrate; via pyruvic acid is the Ser-82. Ser-82 bears the Pyruvic acid (Ser); by autocatalysis mark. His-87 functions as the Proton acceptor; for processing activity in the catalytic mechanism. Residue Cys-102 is the Proton donor; for catalytic activity of the active site.

It belongs to the prokaryotic AdoMetDC family. Type 1 subfamily. In terms of assembly, heterooctamer of four alpha and four beta chains arranged as a tetramer of alpha/beta heterodimers. Pyruvate serves as cofactor. Post-translationally, is synthesized initially as an inactive proenzyme. Formation of the active enzyme involves a self-maturation process in which the active site pyruvoyl group is generated from an internal serine residue via an autocatalytic post-translational modification. Two non-identical subunits are generated from the proenzyme in this reaction, and the pyruvate is formed at the N-terminus of the alpha chain, which is derived from the carboxyl end of the proenzyme. The post-translation cleavage follows an unusual pathway, termed non-hydrolytic serinolysis, in which the side chain hydroxyl group of the serine supplies its oxygen atom to form the C-terminus of the beta chain, while the remainder of the serine residue undergoes an oxidative deamination to produce ammonia and the pyruvoyl group blocking the N-terminus of the alpha chain.

The catalysed reaction is L-arginine + H(+) = agmatine + CO2. It functions in the pathway amine and polyamine biosynthesis; agmatine biosynthesis; agmatine from L-arginine: step 1/1. In terms of biological role, specifically catalyzes the decarboxylation of L-arginine to agmatine. Has no S-adenosylmethionine decarboxylase (AdoMetDC) activity. This is Arginine decarboxylase proenzyme from Saccharolobus islandicus (strain M.16.4 / Kamchatka #3) (Sulfolobus islandicus).